Here is a 185-residue protein sequence, read N- to C-terminus: Probable nicotinate-nucleotide adenylyltransferase (185 aa).

It belongs to the NadD family.

The enzyme catalyses nicotinate beta-D-ribonucleotide + ATP + H(+) = deamido-NAD(+) + diphosphate. Its pathway is cofactor biosynthesis; NAD(+) biosynthesis; deamido-NAD(+) from nicotinate D-ribonucleotide: step 1/1. Catalyzes the reversible adenylation of nicotinate mononucleotide (NaMN) to nicotinic acid adenine dinucleotide (NaAD). The polypeptide is Probable nicotinate-nucleotide adenylyltransferase (Methylorubrum extorquens (strain CM4 / NCIMB 13688) (Methylobacterium extorquens)).